Here is a 468-residue protein sequence, read N- to C-terminus: Phosphatidylglycerol--prolipoprotein diacylglyceryl transferase (468 aa).

Helical transmembrane passes span 21 to 41, 56 to 76, and 96 to 116; these read LPVRAYAVCVITGIIVALLIG, YDIALWAVPFGLIGGRLYHLA, and IWDGGLGIWGAVTLGVMGAWI. Arg-144 serves as a coordination point for a 1,2-diacyl-sn-glycero-3-phospho-(1'-sn-glycerol). A run of 3 helical transmembrane segments spans residues 192 to 212, 218 to 238, and 256 to 276; these read VVQPTFLYELIWNVLVFVALI, FIIGHGRLFGFYVAFYCAGRF, and INSFTSTFVFIGAVVYIILAP. Positions 349-468 are disordered; the sequence is VVQVADRDGE…RWWRLRRRRQ (120 aa). The span at 391–406 shows a compositional bias: low complexity; it reads AEAASAAPEEPAALAS. The segment covering 445–455 has biased composition (basic and acidic residues); the sequence is DGIRRQDDFSS. Residues 456-468 show a composition bias toward basic residues; sequence RRRRWWRLRRRRQ.

It belongs to the Lgt family.

The protein localises to the cell membrane. The catalysed reaction is L-cysteinyl-[prolipoprotein] + a 1,2-diacyl-sn-glycero-3-phospho-(1'-sn-glycerol) = an S-1,2-diacyl-sn-glyceryl-L-cysteinyl-[prolipoprotein] + sn-glycerol 1-phosphate + H(+). It participates in protein modification; lipoprotein biosynthesis (diacylglyceryl transfer). Catalyzes the transfer of the diacylglyceryl group from phosphatidylglycerol to the sulfhydryl group of the N-terminal cysteine of a prolipoprotein, the first step in the formation of mature lipoproteins. In Mycobacterium bovis (strain ATCC BAA-935 / AF2122/97), this protein is Phosphatidylglycerol--prolipoprotein diacylglyceryl transferase.